We begin with the raw amino-acid sequence, 169 residues long: Cell cycle link protein (169 aa).

The interval 9–22 (LPLELREKIVRDHL) is binding to host SKP1 protein. The LXCXE motif, interaction with host RBR motif lies at 110–114 (LSCGE).

It belongs to the nanovirus Clink protein family. In terms of assembly, interacts with host SKP1. Interacts (via LXCXE domain) with host retinoblastoma-related protein 1 (RBR1). Interacts (via LXCXE domain) with retinoblastoma-related proteins (RBR).

In terms of biological role, interacts with and disrupts the function of host retinoblastoma-related proteins RBR, which are key regulators of the cell cycle. Induces transcriptional activation of E2F-regulated S-phase and G2/M-phase-specific genes. Inactivation of the ability of RBR to arrest the cell cycle leads to the stimulation of viral DNA replication. The polypeptide is Cell cycle link protein (DNA-C) (Astragalus sinicus (Chinese milk vetch)).